A 329-amino-acid chain; its full sequence is Ribose-phosphate pyrophosphokinase B (329 aa).

3 residues coordinate Mg(2+): D131, H133, and E146. The segment at 227-242 is binding of phosphoribosylpyrophosphate; sequence TGKIAIIIDDIADTCK.

The protein belongs to the ribose-phosphate pyrophosphokinase family. It depends on Mg(2+) as a cofactor.

It localises to the cytoplasm. It catalyses the reaction D-ribose 5-phosphate + ATP = 5-phospho-alpha-D-ribose 1-diphosphate + AMP + H(+). The protein operates within metabolic intermediate biosynthesis; 5-phospho-alpha-D-ribose 1-diphosphate biosynthesis; 5-phospho-alpha-D-ribose 1-diphosphate from D-ribose 5-phosphate (route I): step 1/1. This is Ribose-phosphate pyrophosphokinase B (prsB) from Dictyostelium discoideum (Social amoeba).